The chain runs to 318 residues: NAD kinase (318 aa).

Asp-84 functions as the Proton acceptor in the catalytic mechanism. Residues 84-85 (DG), Arg-89, 159-160 (NE), Arg-170, Asp-189, and 200-205 (TAYAFS) each bind NAD(+).

The protein belongs to the NAD kinase family. It depends on a divalent metal cation as a cofactor.

The protein resides in the cytoplasm. The enzyme catalyses NAD(+) + ATP = ADP + NADP(+) + H(+). In terms of biological role, involved in the regulation of the intracellular balance of NAD and NADP, and is a key enzyme in the biosynthesis of NADP. Catalyzes specifically the phosphorylation on 2'-hydroxyl of the adenosine moiety of NAD to yield NADP. In Cutibacterium acnes (strain DSM 16379 / KPA171202) (Propionibacterium acnes), this protein is NAD kinase.